The following is a 507-amino-acid chain: Glucose-6-phosphate isomerase (507 aa).

The active-site Proton donor is the glutamate 337. Catalysis depends on residues histidine 368 and lysine 478.

It belongs to the GPI family.

It is found in the cytoplasm. It catalyses the reaction alpha-D-glucose 6-phosphate = beta-D-fructose 6-phosphate. Its pathway is carbohydrate biosynthesis; gluconeogenesis. It participates in carbohydrate degradation; glycolysis; D-glyceraldehyde 3-phosphate and glycerone phosphate from D-glucose: step 2/4. In terms of biological role, catalyzes the reversible isomerization of glucose-6-phosphate to fructose-6-phosphate. This chain is Glucose-6-phosphate isomerase, found in Novosphingobium aromaticivorans (strain ATCC 700278 / DSM 12444 / CCUG 56034 / CIP 105152 / NBRC 16084 / F199).